A 570-amino-acid chain; its full sequence is Proline--tRNA ligase (570 aa).

Belongs to the class-II aminoacyl-tRNA synthetase family. ProS type 1 subfamily. In terms of assembly, homodimer.

It localises to the cytoplasm. The enzyme catalyses tRNA(Pro) + L-proline + ATP = L-prolyl-tRNA(Pro) + AMP + diphosphate. Its function is as follows. Catalyzes the attachment of proline to tRNA(Pro) in a two-step reaction: proline is first activated by ATP to form Pro-AMP and then transferred to the acceptor end of tRNA(Pro). As ProRS can inadvertently accommodate and process non-cognate amino acids such as alanine and cysteine, to avoid such errors it has two additional distinct editing activities against alanine. One activity is designated as 'pretransfer' editing and involves the tRNA(Pro)-independent hydrolysis of activated Ala-AMP. The other activity is designated 'posttransfer' editing and involves deacylation of mischarged Ala-tRNA(Pro). The misacylated Cys-tRNA(Pro) is not edited by ProRS. The polypeptide is Proline--tRNA ligase (Shewanella pealeana (strain ATCC 700345 / ANG-SQ1)).